Reading from the N-terminus, the 626-residue chain is MFSHQDRDRDRKEDGGGDGTEMKSKSRSQPSGLNRVKNLSRKLSAKSRKERKDRDSTDNSSKMSSPGGETSTKQQQELKAQIKIGHYILKETLGVGTFGKVKVGIHETTQYKVAVKILNRQKIKSLDVVGKIRREIQNLSLFRHPHIIRLYQVISTPSDIFMIMEHVSGGELFDYIVKHGRLKTAEARRFFQQIISGVDYCHRHMVVHRDLKPENLLLDEQNNVKIADFGLSNIMTDGDFLRTSCGSPNYAAPEVISGKLYAGPEVDVWSCGVILYALLCGTLPFDDEHVPSLFRKIKSGVFPTPDFLERPIVNLLHHMLCVDPMKRATIKDVIAHEWFQKDLPNYLFPPINESEASIVDIEAVREVTEFQRYHVAEEEVTSALLGDDPHHHLSIAYNLIVDNKRIADETAKLSIEEFYQVTPNKGPGPVHRHPERIAASVSSKITPTLDNTEASGANRNKRAKWHLGIRSQSRPEDIMFEVFRAMKQLDMEWKVLNPYHVIVRRKPDAPAADPPKMSLQLYQVDQRSYLLDFKSLADEESGSASASSSRHASMSMPQKPAGIRGTRTSSMPQAMSMEASIEKMEVHDFSDMSCDVTPPPSPGGAKLSQTMQFFEICAALIGTLAR.

Over residues 1–24 the composition is skewed to basic and acidic residues; it reads MFSHQDRDRDRKEDGGGDGTEMKS. Residues 1 to 77 form a disordered region; that stretch reads MFSHQDRDRD…GETSTKQQQE (77 aa). A compositionally biased stretch (basic residues) spans 38–49; the sequence is NLSRKLSAKSRK. Residues 58–77 are compositionally biased toward polar residues; the sequence is DNSSKMSSPGGETSTKQQQE. In terms of domain architecture, Protein kinase spans 87 to 339; that stretch reads YILKETLGVG…IKDVIAHEWF (253 aa). ATP-binding positions include 93–101 and K116; that span reads LGVGTFGKV. D210 functions as the Proton acceptor in the catalytic mechanism. Position 243 is a phosphothreonine; by par-4 (T243). The tract at residues 541 to 568 is disordered; the sequence is SGSASASSSRHASMSMPQKPAGIRGTRT. Positions 542 to 555 are enriched in low complexity; sequence GSASASSSRHASMS.

Belongs to the protein kinase superfamily. CAMK Ser/Thr protein kinase family. SNF1 subfamily. Tetramer, composed of 2 regulatory (R) and 2 catalytic (C) subunits. In the presence of cAMP it dissociates into 2 active monomeric C subunits and an R dimer that binds four cAMP molecules. In terms of processing, phosphorylated on Thr-243 in response to oxidative stress and during dauer development. Phosphorylation at Thr-243 is increased in response to sodium azide or the AMP analog AICAR (5-amino-1-(5-phospho-beta-D-ribosyl)imidazole-4-carboxamide). As to expression, expressed in the pharynx, the ventral cord, neurons including the hermaphrodite-specific neuron, body wall muscles, the vulva, the excretory canal, and weakly in the intestine.

It carries out the reaction L-seryl-[protein] + ATP = O-phospho-L-seryl-[protein] + ADP + H(+). The catalysed reaction is L-threonyl-[protein] + ATP = O-phospho-L-threonyl-[protein] + ADP + H(+). With respect to regulation, activated by phosphorylation. Its function is as follows. Acts as a sensor that couples lifespan to information about energy levels and insulin-like signals. Role in motility and response to oxidative stress. Involved in the establishment of germline stem cell (GSC) quiescence during dauer development. Plays a role in axon regrowth after axotomy in PLM neurons. Plays a role in the maintenance of glycogen stores which are necessary for resistance to hyperosmotic stress. Plays a role in the regulation of flp-7 secretion from ASI neurons. Keeps the CREB-regulated transcription coactivator 1 homolog crtc-1 inactive which in turn inhibits flp-7 secretion. Following serotonin signaling, derepresses crtc-1 which stimulates flp-7 secretion and subsequent body fat loss. This chain is 5'-AMP-activated protein kinase catalytic subunit alpha-2, found in Caenorhabditis elegans.